We begin with the raw amino-acid sequence, 623 residues long: MKKSHAKPFALRAIVVATAAALSLPAAAVTDVTWEDIANDHKTTGDVLTYGLGLKAQRHSPLKAINTDNVANLVPAWSFSFGGEKQRGQEAQVLVHDGVIYATASYSRIFAIDARSGKRLWEYNARLPDDIRPCCDVVNRGAAIYGDKVFFGTLDAAMVALDRKTGKVVWRKKFGDHKVGYTMTGAPFVIKDQKSGRTLLVHGSSGDEFGVVGWLFARDPDTGEEVWARPMVEGHMGRLNGKDSTPTGDPKAPSWPDDPNSPTGKVEAWSQGGGAPWQTASFDVENNMVVIGAGNPAPWNTWKRTAPGDDPRNWDSLFTSGQAYVDASTGELKGFYQHTPNDAWDFSGNNSVVLFEYKDPKTGKMVNASAHADRNGFFFVTDRDMLAKGAGYPNKPTSLIGAWPFVDGITWASGFDLKTGKPIEKDNRPPQPKEGADKGESIFVSPPFLGGTNWHPMSYSPDTGLFYIPANHWAMDYWTENVTYKAGSAYLGQGFRIKNLFDDHVGILRAIDPSPARSLGAQGRVPAVAGTLTTAGGWVFTGTSDGYLKAFDAKNGKELWKFQTGSGVVSVPVTWEMDGEQYVAIQSGYGGAVPLWGGDMAELTKQVTQGGSMWVFKLPKASR.

The signal sequence occupies residues 1–28 (MKKSHAKPFALRAIVVATAAALSLPAAA). Ca(2+) is bound by residues Asp-40, Thr-43, and Asp-46. Pyrroloquinoline quinone is bound at residue Glu-90. Cys-134 and Cys-135 are joined by a disulfide. Residues Arg-140, Thr-184, and 202–204 (HGS) contribute to the pyrroloquinoline quinone site. Position 208 (Glu-208) interacts with Ca(2+). Residues 235–274 (HMGRLNGKDSTPTGDPKAPSWPDDPNSPTGKVEAWSQGGG) form a disordered region. Ca(2+) contacts are provided by Asn-295 and Asp-345. Asp-345 acts as the Proton acceptor in catalysis. Residue Arg-374 participates in pyrroloquinoline quinone binding. The disordered stretch occupies residues 420-440 (GKPIEKDNRPPQPKEGADKGE). Ala-592 is a binding site for pyrroloquinoline quinone.

It belongs to the bacterial PQQ dehydrogenase family. Pyrroloquinoline quinone serves as cofactor. Requires Ca(2+) as cofactor.

The protein localises to the periplasm. It carries out the reaction butan-1-ol + a quinone = butanal + a quinol. Its function is as follows. Involved in the metabolism of butane. May function primarily in energy generation. Catalyzes the oxidation of 1-butanol to 1-butanal. Also able to use 2-butanol and butyraldehyde, although the affinity is comparatively low. This Thauera butanivorans (strain ATCC 43655 / DSM 2080 / JCM 20651 / CCUG 51053 / NBRC 103042 / IAM 12574 / Bu B1211) (Pseudomonas butanovora) protein is 1-butanol dehydrogenase (quinone).